A 450-amino-acid chain; its full sequence is Putative gustatory receptor 28a (450 aa).

Residues 1 to 47 are Cytoplasmic-facing; the sequence is MAFKLWERFSQADNVFQALRPLTFISLLGLAPFRLNLNPRKEVQTSK. Residues 48–68 traverse the membrane as a helical segment; it reads FSFFAGIVHFLFFVLCFGISV. Residues 69–87 are Extracellular-facing; that stretch reads KEGDSIIGYFFQTNITRFS. A glycan (N-linked (GlcNAc...) asparagine) is linked at N82. A helical membrane pass occupies residues 88–108; that stretch reads DGTLRLTGILAMSTIFGFAMF. The Cytoplasmic segment spans residues 109–138; sequence KRQRLVSIIQNNIVVDEIFVRLGMKLDYRR. A helical membrane pass occupies residues 139–159; that stretch reads ILLSSFLISLGMLLFNVIYLC. Over 160-171 the chain is Extracellular; the sequence is VSYSLLVSATIS. Residues 172–192 traverse the membrane as a helical segment; it reads PSFVTFTTFALPHINISLMVF. The Cytoplasmic segment spans residues 193 to 292; sequence KFLCTTDLAR…CQTIEEYFTY (100 aa). A helical transmembrane segment spans residues 293 to 313; the sequence is PLLGIIAISFLFILFDDFYIL. The Extracellular portion of the chain corresponds to 314 to 329; it reads EAILNPKRLDVFEADE. Residues 330–350 form a helical membrane-spanning segment; it reads FFAFFLMQLIWYIVIIVLIVE. Residues 351 to 407 lie on the Cytoplasmic side of the membrane; that stretch reads GSSRTILHSSYTAAIVHKILNITDDPELRDRLFRLSLQLSHRKVLFTAAGLFRLDRT. Residues 408 to 424 traverse the membrane as a helical segment; sequence LIFTITGAATCYLIILI. Topologically, residues 425 to 450 are extracellular; the sequence is QFRFTHHMDDTSSNSTNNLHSIHLGD. Residue N438 is glycosylated (N-linked (GlcNAc...) asparagine).

This sequence belongs to the insect chemoreceptor superfamily. Gustatory receptor (GR) family. Gr2a subfamily. In terms of tissue distribution, in addition to expression in a large number of taste neurons, Gr28a is also expressed in a few nonchemosensory neurons, including the campaniform sensilla of the wing, leg stretch receptors, and multiple dendritic (MD) neurons in the abdomen. In larvea, is expressed in neurons of the terminal external chemosensory organ, the dorsal external chemosensory organ, as well as in the ventral and posterior pharyngeal sense organ.

It is found in the cell membrane. In terms of biological role, probable gustatory receptor which mediates acceptance or avoidance behavior, depending on its substrates. Atypical expression also suggests nongustatory roles in the nervous system and tissues involved in proprioception, hygroreception, and other sensory modalities. It is also possible that it has chemosensory roles in the detection of internal ligands. The chain is Putative gustatory receptor 28a (Gr28a) from Drosophila melanogaster (Fruit fly).